Reading from the N-terminus, the 406-residue chain is Tyrosine--tRNA ligase (406 aa).

Tyr-35 lines the L-tyrosine pocket. Residues 40-49 (ATSASLHIGH) carry the 'HIGH' region motif. Residues Tyr-167 and Gln-171 each contribute to the L-tyrosine site. The 'KMSKS' region signature appears at 227-231 (KMGKS). Lys-230 is a binding site for ATP. One can recognise an S4 RNA-binding domain in the interval 341-405 (ILLVDLMVLA…IGKKKILRIV (65 aa)).

The protein belongs to the class-I aminoacyl-tRNA synthetase family. TyrS type 1 subfamily. In terms of assembly, homodimer.

It localises to the cytoplasm. The enzyme catalyses tRNA(Tyr) + L-tyrosine + ATP = L-tyrosyl-tRNA(Tyr) + AMP + diphosphate + H(+). Its function is as follows. Catalyzes the attachment of tyrosine to tRNA(Tyr) in a two-step reaction: tyrosine is first activated by ATP to form Tyr-AMP and then transferred to the acceptor end of tRNA(Tyr). The polypeptide is Tyrosine--tRNA ligase (Borrelia duttonii (strain Ly)).